Here is a 697-residue protein sequence, read N- to C-terminus: ATP-dependent zinc metalloprotease FtsH (697 aa).

A disordered region spans residues 1 to 23 (MSQNERDSLELERKNTPPDGPRL). The Cytoplasmic segment spans residues 1 to 29 (MSQNERDSLELERKNTPPDGPRLPERRPR). A helical membrane pass occupies residues 30–50 (FSVWIYLAIFLALLVHFFLFW). Topologically, residues 51 to 158 (TGTDTSTIEY…QFTARIEENW (108 aa)) are periplasmic. Residues 159–179 (FGGLLTWIFPLILIVALWVFL) form a helical membrane-spanning segment. The Cytoplasmic segment spans residues 180-697 (LRRMSPSSQV…TERPESSSAP (518 aa)). 251–258 (GPPGTGKT) contacts ATP. Position 474 (H474) interacts with Zn(2+). E475 is an active-site residue. Residues H478 and D550 each contribute to the Zn(2+) site. The interval 649–697 (GPRPYGDYPSPNGKDVEELKDLQKGEPTSSSAVEAPAPQTERPESSSAP) is disordered. The segment covering 662–672 (KDVEELKDLQK) has biased composition (basic and acidic residues).

In the central section; belongs to the AAA ATPase family. It in the C-terminal section; belongs to the peptidase M41 family. Homohexamer. Requires Zn(2+) as cofactor.

The protein localises to the cell inner membrane. Functionally, acts as a processive, ATP-dependent zinc metallopeptidase for both cytoplasmic and membrane proteins. Plays a role in the quality control of integral membrane proteins. The polypeptide is ATP-dependent zinc metalloprotease FtsH (Rhodothermus marinus (strain ATCC 43812 / DSM 4252 / R-10) (Rhodothermus obamensis)).